We begin with the raw amino-acid sequence, 317 residues long: Protein-methionine-sulfoxide reductase catalytic subunit MsrP (317 aa).

A signal peptide (tat-type signal) is located at residues 1 to 40; it reads MKKLTSNDVTPEEIFYQRRKIIKAFGLSAVATALPTFSFA. Mo-molybdopterin is bound by residues Asn71, 74–75, Cys129, Thr164, Asn216, Arg221, and 232–234; these read YE and SIK.

The protein belongs to the MsrP family. As to quaternary structure, heterodimer of a catalytic subunit (MsrP) and a heme-binding subunit (MsrQ). Mo-molybdopterin serves as cofactor. In terms of processing, predicted to be exported by the Tat system. The position of the signal peptide cleavage has not been experimentally proven.

Its subcellular location is the periplasm. The enzyme catalyses L-methionyl-[protein] + a quinone + H2O = L-methionyl-(S)-S-oxide-[protein] + a quinol. It carries out the reaction L-methionyl-[protein] + a quinone + H2O = L-methionyl-(R)-S-oxide-[protein] + a quinol. Its function is as follows. Part of the MsrPQ system that repairs oxidized periplasmic proteins containing methionine sulfoxide residues (Met-O), using respiratory chain electrons. Thus protects these proteins from oxidative-stress damage caused by reactive species of oxygen and chlorine generated by the host defense mechanisms. MsrPQ is essential for the maintenance of envelope integrity under bleach stress, rescuing a wide series of structurally unrelated periplasmic proteins from methionine oxidation. The catalytic subunit MsrP is non-stereospecific, being able to reduce both (R-) and (S-) diastereoisomers of methionine sulfoxide. This is Protein-methionine-sulfoxide reductase catalytic subunit MsrP from Histophilus somni (strain 2336) (Haemophilus somnus).